We begin with the raw amino-acid sequence, 390 residues long: MTILSPKDVVIVDGVRSAMGKTKNGMFRHVRADSMSAELVRALVERNDFDPRDVEDIIWGCVNQTLEQGLNIGRNIGLLAGIPKTAGGQTINRLCGSSMQALHTAAAQIMTGQGDVFIIGGVEHMGHVGMMHGVDLNPEASKHYAKASNMMGLTAEMLGRMNNITREEQDAFGLESHRRAWAATTEGRFDNEIIGIEGHDEAGRLQLCTVDEVIRPDATMEQMQKLRPAFDPVGGTVTAATSSALSDGASAMLIMSAQKAKELGLKPRARIRSMAIAGCDAAIMGYGPVPATQKALKRAGMSIDDMQTIELNEAFAAQGLSVLKALNLTDKQDIVNINGGAIALGHPLGCSGARITVTLLNAMEQSDTEIGLATMCIGLGQGIATIIERV.

Catalysis depends on Cys-95, which acts as the Acyl-thioester intermediate. Residues His-346 and Cys-376 each act as proton acceptor in the active site.

The protein belongs to the thiolase-like superfamily. Thiolase family. In terms of assembly, heterotetramer of two alpha chains (FadB) and two beta chains (FadA).

The protein resides in the cytoplasm. The catalysed reaction is an acyl-CoA + acetyl-CoA = a 3-oxoacyl-CoA + CoA. It participates in lipid metabolism; fatty acid beta-oxidation. Its function is as follows. Catalyzes the final step of fatty acid oxidation in which acetyl-CoA is released and the CoA ester of a fatty acid two carbons shorter is formed. In Psychrobacter cryohalolentis (strain ATCC BAA-1226 / DSM 17306 / VKM B-2378 / K5), this protein is 3-ketoacyl-CoA thiolase.